The sequence spans 648 residues: Proton myo-inositol cotransporter (648 aa).

At 1 to 76 (MSRKASENVE…AARRQFQQDE (76 aa)) the chain is on the cytoplasmic side. Ser-6, Ser-47, and Ser-50 each carry phosphoserine. The chain crosses the membrane as a helical span at residues 77–97 (TPAFVYVVAVFSALGGFLFGY). Residues 98-125 (DTGVVSGAMLLLKRQLSLDALWQELLVS) are Extracellular-facing. Residues 126-146 (STVGAAAVSALAGGALNGVFG) traverse the membrane as a helical segment. Residues 147 to 148 (RR) lie on the Cytoplasmic side of the membrane. Residues 149–169 (AAILLASALFTAGSAVLAAAN) traverse the membrane as a helical segment. Over 170 to 178 (NKETLLAGR) the chain is Extracellular. The helical transmembrane segment at 179–199 (LVVGLGIGIASMTVPVYIAEV) threads the bilayer. Residues 200–212 (SPPNLRGRLVTIN) are Cytoplasmic-facing. The helical transmembrane segment at 213–233 (TLFITGGQFFASVVDGAFSYL) threads the bilayer. At 234–239 (QKDGWR) the chain is on the extracellular side. The chain crosses the membrane as a helical span at residues 240-260 (YMLGLAAVPAVIQFFGFLFLP). Over 261 to 324 (ESPRWLIQKG…RMLSYPPTRR (64 aa)) the chain is Cytoplasmic. A helical membrane pass occupies residues 325 to 345 (ALIVGCGLQMFQQLSGINTIM). Residues 346 to 363 (YYSATILQMSGVEDDRLA) are Extracellular-facing. Residues 364-384 (IWLASVTAFTNFIFTLVGVWL) traverse the membrane as a helical segment. The Cytoplasmic segment spans residues 385–393 (VEKVGRRKL). The chain crosses the membrane as a helical span at residues 394–414 (TFGSLAGTTVALIILALGFVL). The Extracellular segment spans residues 415-508 (SAQVSPRITF…NFCPTPYSWT (94 aa)). Residues Asn-433, Asn-458, and Asn-485 are each glycosylated (N-linked (GlcNAc...) asparagine). The chain crosses the membrane as a helical span at residues 509–529 (ALLGLILYLVFFAPGMGPMPW). Residues 530–549 (TVNSEIYPLWARSTGNACSS) lie on the Cytoplasmic side of the membrane. A helical membrane pass occupies residues 550-570 (GINWIFNVLVSLTFLHTAEYL). Residues 571-573 (TYY) lie on the Extracellular side of the membrane. A helical transmembrane segment spans residues 574-594 (GAFFLYAGFAAVGLLFIYGCL). Over 595 to 648 (PETKGKKLEEIESLFDNRLCTCGTSDSDEGRYIEYIRVKGSNYHLSDNDASDVE) the chain is Cytoplasmic. Phosphoserine is present on residues Ser-640 and Ser-645.

Belongs to the major facilitator superfamily. Sugar transporter (TC 2.A.1.1) family. Glycosylated. As to expression, predominantly expressed in the brain.

The protein resides in the cell membrane. It carries out the reaction myo-inositol(out) + H(+)(out) = myo-inositol(in) + H(+)(in). In terms of biological role, h(+)-myo-inositol cotransporter. Can also transport related stereoisomers. This Homo sapiens (Human) protein is Proton myo-inositol cotransporter.